We begin with the raw amino-acid sequence, 209 residues long: Large ribosomal subunit protein uL4 (209 aa).

The tract at residues 46–71 is disordered; it reads GTSSTKTRSEVRGSSKKPWKQKGTGR. The segment covering 59 to 71 has biased composition (basic residues); sequence SSKKPWKQKGTGR.

This sequence belongs to the universal ribosomal protein uL4 family. Part of the 50S ribosomal subunit.

Functionally, one of the primary rRNA binding proteins, this protein initially binds near the 5'-end of the 23S rRNA. It is important during the early stages of 50S assembly. It makes multiple contacts with different domains of the 23S rRNA in the assembled 50S subunit and ribosome. In terms of biological role, forms part of the polypeptide exit tunnel. The protein is Large ribosomal subunit protein uL4 of Borreliella afzelii (strain PKo) (Borrelia afzelii).